Consider the following 359-residue polypeptide: CMP-N-acetylneuraminate-poly-alpha-2,8-sialyltransferase (359 aa).

At 1–7 (MRSIRKR) the chain is on the cytoplasmic side. The chain crosses the membrane as a helical; Signal-anchor for type II membrane protein span at residues 8–20 (WTICTISLLLIFY). The Lumenal segment spans residues 21–359 (KTKEMARTEE…KLTTGKCIKQ (339 aa)). N-linked (GlcNAc...) asparagine glycans are attached at residues Asn50, Asn74, and Asn119. Cystine bridges form between Cys142–Cys292 and Cys156–Cys356. CMP-N-acetyl-beta-neuraminate contacts are provided by Asn147 and Asn170. Residues Asn204 and Asn219 are each glycosylated (N-linked (GlcNAc...) asparagine). CMP-N-acetyl-beta-neuraminate contacts are provided by Ser279, Thr280, Gly281, and Trp301. His331 functions as the Proton donor/acceptor in the catalytic mechanism.

It belongs to the glycosyltransferase 29 family. Autopolysialylated.

The protein resides in the golgi apparatus membrane. The protein localises to the secreted. The enzyme catalyses [N-acetyl-alpha-D-neuraminosyl-(2-&gt;8)](n) + CMP-N-acetyl-beta-neuraminate = [N-acetyl-alpha-D-neuraminosyl-(2-&gt;8)](n+1) + CMP + H(+). Functionally, catalyzes the transfer of a sialic acid from a CMP-linked sialic acid donor onto a terminal alpha-2,3-, alpha-2,6-, or alpha-2,8-linked sialic acid of an N-linked glycan protein acceptor through alpha-2,8-linkages. Therefore, participates in polysialic acid synthesis on various sialylated N-acetyllactosaminyl oligosaccharides, including NCAM1 N-glycans, FETUB N-glycans and AHSG. It is noteworthy that alpha-2,3-linked sialic acid is apparently a better acceptor than alpha-2,6-linked sialic acid. This Bos taurus (Bovine) protein is CMP-N-acetylneuraminate-poly-alpha-2,8-sialyltransferase (ST8SIA4).